Here is a 97-residue protein sequence, read N- to C-terminus: uncharacterized protein (97 aa).

Residues 38-97 form a disordered region; the sequence is TSPPDWNKFSGKVSINEPTTSKSKSKSTSTSTSTSTSTSTSTSTSSSTSSTSSTTSSINK. The segment covering 56–97 has biased composition (low complexity); it reads TTSKSKSKSTSTSTSTSTSTSTSTSTSSSTSSTSSTTSSINK.

This is an uncharacterized protein from Dictyostelium discoideum (Social amoeba).